The primary structure comprises 197 residues: Recombination protein RecR (197 aa).

The C4-type zinc finger occupies 55–70 (CVQCRDFTESEICTIC). Residues 78–173 (QQLCVVESPA…RPSRLAQGMP (96 aa)) form the Toprim domain.

Belongs to the RecR family.

Functionally, may play a role in DNA repair. It seems to be involved in an RecBC-independent recombinational process of DNA repair. It may act with RecF and RecO. This is Recombination protein RecR from Xanthomonas euvesicatoria pv. vesicatoria (strain 85-10) (Xanthomonas campestris pv. vesicatoria).